A 535-amino-acid polypeptide reads, in one-letter code: Glutamyl-tRNA reductase 3, chloroplastic (535 aa).

Residue C131 is the Nucleophile of the active site. Residues 131-133 (CNR), S190, 195-197 (EGQ), and Q201 each bind substrate. An NADP(+)-binding site is contributed by 272–277 (GAGKMG).

It belongs to the glutamyl-tRNA reductase family. Primarily expressed in roots.

It is found in the plastid. Its subcellular location is the chloroplast. The catalysed reaction is (S)-4-amino-5-oxopentanoate + tRNA(Glu) + NADP(+) = L-glutamyl-tRNA(Glu) + NADPH + H(+). The protein operates within porphyrin-containing compound metabolism; protoporphyrin-IX biosynthesis; 5-aminolevulinate from L-glutamyl-tRNA(Glu): step 1/2. Catalyzes the NADPH-dependent reduction of glutamyl-tRNA(Glu) to glutamate 1-semialdehyde (GSA). This is Glutamyl-tRNA reductase 3, chloroplastic (HEMA3) from Hordeum vulgare (Barley).